We begin with the raw amino-acid sequence, 309 residues long: Ubiquitin-conjugating enzyme E2 32 (309 aa).

Positions 11–166 (PAVKRILQEV…ERQKIIDEIH (156 aa)) constitute a UBC core domain. Cys-93 serves as the catalytic Glycyl thioester intermediate. The helical transmembrane segment at 275 to 295 (FTWAAVGLTIAIMVLLLKKFI) threads the bilayer.

The protein belongs to the ubiquitin-conjugating enzyme family.

The protein localises to the membrane. The enzyme catalyses S-ubiquitinyl-[E1 ubiquitin-activating enzyme]-L-cysteine + [E2 ubiquitin-conjugating enzyme]-L-cysteine = [E1 ubiquitin-activating enzyme]-L-cysteine + S-ubiquitinyl-[E2 ubiquitin-conjugating enzyme]-L-cysteine.. It functions in the pathway protein modification; protein ubiquitination. Its function is as follows. Accepts the ubiquitin from the E1 complex and catalyzes its covalent attachment to other proteins. In Arabidopsis thaliana (Mouse-ear cress), this protein is Ubiquitin-conjugating enzyme E2 32 (UBC32).